The sequence spans 245 residues: Uridylate kinase (245 aa).

16-19 is a binding site for ATP; it reads KLSG. Residues 24–29 form an involved in allosteric activation by GTP region; sequence GDNGFG. Residue G59 coordinates UMP. ATP contacts are provided by G60 and R64. UMP contacts are provided by residues D78 and 139–146; that span reads NGAPFFTT. 3 residues coordinate ATP: N167, Y173, and D176.

Belongs to the UMP kinase family. In terms of assembly, homohexamer.

The protein resides in the cytoplasm. It catalyses the reaction UMP + ATP = UDP + ADP. It participates in pyrimidine metabolism; CTP biosynthesis via de novo pathway; UDP from UMP (UMPK route): step 1/1. Its activity is regulated as follows. Allosterically activated by GTP. Inhibited by UTP. Catalyzes the reversible phosphorylation of UMP to UDP. This chain is Uridylate kinase, found in Deinococcus radiodurans (strain ATCC 13939 / DSM 20539 / JCM 16871 / CCUG 27074 / LMG 4051 / NBRC 15346 / NCIMB 9279 / VKM B-1422 / R1).